The chain runs to 788 residues: Protein translocase subunit SecA 2 (788 aa).

ATP-binding positions include glutamine 86, glycine 104–threonine 108, and aspartate 493.

The protein belongs to the SecA family. As to quaternary structure, monomer and homodimer. Part of the essential Sec protein translocation apparatus which comprises SecA, SecYEG and auxiliary proteins SecDF. Other proteins may also be involved.

It localises to the cell membrane. The protein localises to the cytoplasm. The catalysed reaction is ATP + H2O + cellular proteinSide 1 = ADP + phosphate + cellular proteinSide 2.. Its function is as follows. Part of the Sec protein translocase complex. Interacts with the SecYEG preprotein conducting channel. Has a central role in coupling the hydrolysis of ATP to the transfer of proteins into and across the cell membrane, serving as an ATP-driven molecular motor driving the stepwise translocation of polypeptide chains across the membrane. The chain is Protein translocase subunit SecA 2 from Bacillus thuringiensis (strain Al Hakam).